We begin with the raw amino-acid sequence, 609 residues long: MTDSFNATQFLKTVSSSAGVYRMYDAQGVVIYVGKAKDLKKRLSSYFRRNLPNVKTQALVSHIANIDVTLTPSETDALILENDYIKQYMPRYNVLLRDDKSYPYIFLSGHRHPRLAYHRGPQREKGHYFGPYPNGGAVRESLHLMQKLFPIRQCDDLYYKARSRPCLQYQIARCSAPCVGKISDEDYAEQVKLASLFLRGKDQQVIATLVGKMEQAAMDLNYEDAARYRDQISALRRVAEQQEVSSDSGDMDVIGAYYASGIACFHLLFIRNGKIFGSRSYYPSVPDETEVSEVLRAFMLQFYLNVDSQRTLPREIVVSHEFEDIHELEEAIAQASNRRLLIKTKVRSERASFLRIADANAKNAVETRLSHQNTVEERFLLLEEALEQSQAINRMECFDISHTMGESTVASCVVFNREGPSKGEYRRYNISGITPGDDYAAMKQAIGRRFDKIEADGKIPDILFIDGGMGQLRIAQKVVNEKFAHLDVAPTLIGVAKGEGRKPGLETLIYGENEVAFSLPADSGALHLIQHIRDESHRFAITGHRNKRQKTRNTSTLESIPGVGPKRRKALLQYLGGLQQVKGASVAQLSKVPGISLEMAQTIHDALRG.

A GIY-YIG domain is found at 16–94 (SSAGVYRMYD…IKQYMPRYNV (79 aa)). In terms of domain architecture, UVR spans 203–238 (QQVIATLVGKMEQAAMDLNYEDAARYRDQISALRRV).

Belongs to the UvrC family. Interacts with UvrB in an incision complex.

Its subcellular location is the cytoplasm. In terms of biological role, the UvrABC repair system catalyzes the recognition and processing of DNA lesions. UvrC both incises the 5' and 3' sides of the lesion. The N-terminal half is responsible for the 3' incision and the C-terminal half is responsible for the 5' incision. This chain is UvrABC system protein C, found in Shewanella loihica (strain ATCC BAA-1088 / PV-4).